The primary structure comprises 400 residues: uncharacterized protein (400 aa).

Residue 36 to 43 participates in ATP binding; the sequence is GSINSGKT.

The protein belongs to the archaeal ATPase family.

This is an uncharacterized protein from Methanocaldococcus jannaschii (strain ATCC 43067 / DSM 2661 / JAL-1 / JCM 10045 / NBRC 100440) (Methanococcus jannaschii).